Reading from the N-terminus, the 520-residue chain is Probable helicase MJECL08 (520 aa).

Residues R162, 171–176 (GAGKSN), and 501–502 (KI) each bind ATP.

It belongs to the HerA family.

The catalysed reaction is Couples ATP hydrolysis with the unwinding of duplex DNA at the replication fork by translocating in the 5'-3' direction. This creates two antiparallel DNA single strands (ssDNA). The leading ssDNA polymer is the template for DNA polymerase III holoenzyme which synthesizes a continuous strand.. It catalyses the reaction ATP + H2O = ADP + phosphate + H(+). The enzyme catalyses Couples ATP hydrolysis with the unwinding of duplex DNA by translocating in the 3'-5' direction.. A probably bidirectional DNA helicase. This Methanocaldococcus jannaschii (strain ATCC 43067 / DSM 2661 / JAL-1 / JCM 10045 / NBRC 100440) (Methanococcus jannaschii) protein is Probable helicase MJECL08.